The sequence spans 230 residues: Phosphatidylserine decarboxylase proenzyme (230 aa).

The Schiff-base intermediate with substrate; via pyruvic acid role is filled by serine 186. Serine 186 bears the Pyruvic acid (Ser); by autocatalysis mark.

Belongs to the phosphatidylserine decarboxylase family. PSD-A subfamily. In terms of assembly, heterodimer of a large membrane-associated beta subunit and a small pyruvoyl-containing alpha subunit. It depends on pyruvate as a cofactor. In terms of processing, is synthesized initially as an inactive proenzyme. Formation of the active enzyme involves a self-maturation process in which the active site pyruvoyl group is generated from an internal serine residue via an autocatalytic post-translational modification. Two non-identical subunits are generated from the proenzyme in this reaction, and the pyruvate is formed at the N-terminus of the alpha chain, which is derived from the carboxyl end of the proenzyme. The post-translation cleavage follows an unusual pathway, termed non-hydrolytic serinolysis, in which the side chain hydroxyl group of the serine supplies its oxygen atom to form the C-terminus of the beta chain, while the remainder of the serine residue undergoes an oxidative deamination to produce ammonia and the pyruvoyl prosthetic group on the alpha chain.

The protein localises to the cell membrane. It catalyses the reaction a 1,2-diacyl-sn-glycero-3-phospho-L-serine + H(+) = a 1,2-diacyl-sn-glycero-3-phosphoethanolamine + CO2. The protein operates within phospholipid metabolism; phosphatidylethanolamine biosynthesis; phosphatidylethanolamine from CDP-diacylglycerol: step 2/2. In terms of biological role, catalyzes the formation of phosphatidylethanolamine (PtdEtn) from phosphatidylserine (PtdSer). The sequence is that of Phosphatidylserine decarboxylase proenzyme from Wolbachia sp. subsp. Brugia malayi (strain TRS).